The chain runs to 344 residues: S-adenosylmethionine:tRNA ribosyltransferase-isomerase (344 aa).

The protein belongs to the QueA family. In terms of assembly, monomer.

It localises to the cytoplasm. It catalyses the reaction 7-aminomethyl-7-carbaguanosine(34) in tRNA + S-adenosyl-L-methionine = epoxyqueuosine(34) in tRNA + adenine + L-methionine + 2 H(+). The protein operates within tRNA modification; tRNA-queuosine biosynthesis. In terms of biological role, transfers and isomerizes the ribose moiety from AdoMet to the 7-aminomethyl group of 7-deazaguanine (preQ1-tRNA) to give epoxyqueuosine (oQ-tRNA). The protein is S-adenosylmethionine:tRNA ribosyltransferase-isomerase of Pediococcus pentosaceus (strain ATCC 25745 / CCUG 21536 / LMG 10740 / 183-1w).